Here is a 283-residue protein sequence, read N- to C-terminus: RNA-binding protein with serine-rich domain 1 (283 aa).

Disordered regions lie at residues 1-141 (MAPS…KLYL) and 217-283 (QRIR…NSSR). Over residues 10 to 36 (ERSEDKPRERGKEKAPAKEGAEKERGR) the composition is skewed to basic and acidic residues. Residues 45 to 101 (NSTGSSSSRSSSSSSSSSGSSSGSSSGSSSSSGSSRSGSSSSSRSSSSSGSSGSPSP) are compositionally biased toward low complexity. The span at 102–119 (SRRRHDNRRRSRSKSKSQ) shows a compositional bias: basic residues. The RRM domain maps to 137–216 (TKLYLGRLTR…QEITATAILA (80 aa)). Residues 242–276 (TPPRMRRRSRSPRRRSPVRRRSRSRSPGRRRHRSR) are compositionally biased toward basic residues.

It belongs to the splicing factor SR family. As to quaternary structure, component of the active spliceosome.

It is found in the nucleus. The protein localises to the nucleus speckle. The protein resides in the cytoplasm. Functionally, component of a splicing-dependent multiprotein exon junction complex (EJC) deposited at splice junction on mRNAs. The EJC is a dynamic structure consisting of a few core proteins and several more peripheral nuclear and cytoplasmic associated factors that join the complex only transiently either during EJC assembly or during subsequent mRNA metabolism. Putative component of the spliceosome which enhances the formation of the ATP-dependent A complex of the spliceosome. May participate in mRNA 3'-end cleavage. Also mediates increase of mRNA abundance and translational efficiency. The polypeptide is RNA-binding protein with serine-rich domain 1 (rnps1) (Danio rerio (Zebrafish)).